Reading from the N-terminus, the 399-residue chain is Methylthioribose kinase (399 aa).

Residues N40, K57, and 111–113 (EDL) each bind ATP. Position 229 (D229) interacts with substrate. 246–248 (DAE) provides a ligand contact to ATP. R344 serves as a coordination point for substrate.

The protein belongs to the methylthioribose kinase family. Homodimer.

The catalysed reaction is 5-(methylsulfanyl)-D-ribose + ATP = 5-(methylsulfanyl)-alpha-D-ribose 1-phosphate + ADP + H(+). Its pathway is amino-acid biosynthesis; L-methionine biosynthesis via salvage pathway; S-methyl-5-thio-alpha-D-ribose 1-phosphate from S-methyl-5'-thioadenosine (hydrolase route): step 2/2. Its function is as follows. Catalyzes the phosphorylation of methylthioribose into methylthioribose-1-phosphate. The chain is Methylthioribose kinase from Cronobacter sakazakii (strain ATCC BAA-894) (Enterobacter sakazakii).